Reading from the N-terminus, the 489-residue chain is Inositol-pentakisphosphate 2-kinase (489 aa).

An EXKPK motif motif is present at residues 136-140; the sequence is EIKPK.

It belongs to the IPK1 type 2 family.

Its subcellular location is the cytoplasm. The protein resides in the nucleus. The enzyme catalyses 1D-myo-inositol 1,3,4,5,6-pentakisphosphate + ATP = 1D-myo-inositol hexakisphosphate + ADP + H(+). Phosphorylates Ins(1,3,4,5,6)P5 at position 2 to form Ins(1,2,3,4,5,6)P6 (InsP6 or phytate). InsP6 is involved in many processes such as mRNA export, non-homologous end-joining, endocytosis, ion channel regulation. It also protects cells from TNF-alpha-induced apoptosis. In Rattus norvegicus (Rat), this protein is Inositol-pentakisphosphate 2-kinase (Ippk).